The primary structure comprises 456 residues: tRNA modification GTPase MnmE (456 aa).

(6S)-5-formyl-5,6,7,8-tetrahydrofolate is bound by residues R23, E80, and K122. The TrmE-type G domain maps to 218–380 (AKRIVIVGPP…LKKHLSNRQK (163 aa)). N228 provides a ligand contact to K(+). Residues 228–233 (NAGKSS), 247–253 (TDLPGTT), and 272–275 (DTAG) each bind GTP. A Mg(2+)-binding site is contributed by S232. K(+) is bound by residues T247, L249, and T252. T253 lines the Mg(2+) pocket. K456 serves as a coordination point for (6S)-5-formyl-5,6,7,8-tetrahydrofolate.

The protein belongs to the TRAFAC class TrmE-Era-EngA-EngB-Septin-like GTPase superfamily. TrmE GTPase family. As to quaternary structure, homodimer. Heterotetramer of two MnmE and two MnmG subunits. K(+) is required as a cofactor.

The protein resides in the cytoplasm. Functionally, exhibits a very high intrinsic GTPase hydrolysis rate. Involved in the addition of a carboxymethylaminomethyl (cmnm) group at the wobble position (U34) of certain tRNAs, forming tRNA-cmnm(5)s(2)U34. This Buchnera aphidicola subsp. Schizaphis graminum (strain Sg) protein is tRNA modification GTPase MnmE.